We begin with the raw amino-acid sequence, 429 residues long: 3-phosphoshikimate 1-carboxyvinyltransferase (429 aa).

3-phosphoshikimate contacts are provided by K11, S12, and R16. K11 lines the phosphoenolpyruvate pocket. The phosphoenolpyruvate site is built by G82 and R110. The 3-phosphoshikimate site is built by S155, Q157, D302, and K329. Position 157 (Q157) interacts with phosphoenolpyruvate. Catalysis depends on D302, which acts as the Proton acceptor. Residues R333 and R385 each contribute to the phosphoenolpyruvate site.

The protein belongs to the EPSP synthase family. As to quaternary structure, monomer.

It localises to the cytoplasm. The catalysed reaction is 3-phosphoshikimate + phosphoenolpyruvate = 5-O-(1-carboxyvinyl)-3-phosphoshikimate + phosphate. It participates in metabolic intermediate biosynthesis; chorismate biosynthesis; chorismate from D-erythrose 4-phosphate and phosphoenolpyruvate: step 6/7. In terms of biological role, catalyzes the transfer of the enolpyruvyl moiety of phosphoenolpyruvate (PEP) to the 5-hydroxyl of shikimate-3-phosphate (S3P) to produce enolpyruvyl shikimate-3-phosphate and inorganic phosphate. The protein is 3-phosphoshikimate 1-carboxyvinyltransferase of Helicobacter pylori (strain G27).